Here is a 231-residue protein sequence, read N- to C-terminus: 7-cyano-7-deazaguanine synthase (231 aa).

8–18 (FSGGQDSTTCL) contacts ATP. Zn(2+)-binding residues include Cys-188, Cys-197, Cys-200, and Cys-203.

It belongs to the QueC family. It depends on Zn(2+) as a cofactor.

It catalyses the reaction 7-carboxy-7-deazaguanine + NH4(+) + ATP = 7-cyano-7-deazaguanine + ADP + phosphate + H2O + H(+). It participates in purine metabolism; 7-cyano-7-deazaguanine biosynthesis. In terms of biological role, catalyzes the ATP-dependent conversion of 7-carboxy-7-deazaguanine (CDG) to 7-cyano-7-deazaguanine (preQ(0)). The protein is 7-cyano-7-deazaguanine synthase of Shigella dysenteriae serotype 1 (strain Sd197).